The chain runs to 180 residues: Cytochrome c oxidase assembly protein CtaG (180 aa).

Over Met-1–Ser-8 the chain is Cytoplasmic. A helical; Signal-anchor for type II membrane protein membrane pass occupies residues Leu-9–Pro-29. Topologically, residues Leu-30–Lys-180 are periplasmic.

This sequence belongs to the COX11/CtaG family.

It localises to the cell inner membrane. In terms of biological role, exerts its effect at some terminal stage of cytochrome c oxidase synthesis, probably by being involved in the insertion of the copper B into subunit I. In Rickettsia bellii (strain RML369-C), this protein is Cytochrome c oxidase assembly protein CtaG.